A 127-amino-acid polypeptide reads, in one-letter code: Spore germination protein 2 (127 aa).

An N-terminal signal peptide occupies residues 1–25 (MNIRNSLILIISTILFFSIINGSLS). N-linked (GlcNAc...) asparagine glycans are attached at residues Asn54 and Asn118.

It belongs to the Dictyostelium gerABC family.

The protein localises to the secreted. This chain is Spore germination protein 2 (gerB), found in Dictyostelium discoideum (Social amoeba).